The chain runs to 310 residues: tRNA-cytidine(32) 2-sulfurtransferase (310 aa).

Positions 47-52 (SGGKDS) match the PP-loop motif motif. [4Fe-4S] cluster-binding residues include Cys122, Cys125, and Cys213.

The protein belongs to the TtcA family. As to quaternary structure, homodimer. Requires Mg(2+) as cofactor. The cofactor is [4Fe-4S] cluster.

It is found in the cytoplasm. The enzyme catalyses cytidine(32) in tRNA + S-sulfanyl-L-cysteinyl-[cysteine desulfurase] + AH2 + ATP = 2-thiocytidine(32) in tRNA + L-cysteinyl-[cysteine desulfurase] + A + AMP + diphosphate + H(+). The protein operates within tRNA modification. Catalyzes the ATP-dependent 2-thiolation of cytidine in position 32 of tRNA, to form 2-thiocytidine (s(2)C32). The sulfur atoms are provided by the cysteine/cysteine desulfurase (IscS) system. This Haemophilus influenzae (strain PittEE) protein is tRNA-cytidine(32) 2-sulfurtransferase.